The sequence spans 238 residues: Cysteine-rich venom protein pseudechetoxin (238 aa).

An N-terminal signal peptide occupies residues 1–19 (MIAFIVLLSLAAVLQQSSG). A propeptide spanning residues 20-27 (TADFASES) is cleaved from the precursor. An SCP domain is found at 38–164 (VDKHNALRRS…SSKYLYVCQY (127 aa)). Residues Thr-51 and Ser-106 each coordinate Zn(2+). Disulfide bonds link Cys-75-Cys-153, Cys-92-Cys-165, Cys-148-Cys-162, Cys-184-Cys-191, Cys-187-Cys-196, Cys-200-Cys-233, Cys-209-Cys-227, and Cys-218-Cys-231. Residues 200 to 233 (CKRNNDFSNCKSLAKKSKCQTEWIKKKCPASCFC) enclose the ShKT domain.

In terms of tissue distribution, expressed by the venom gland.

It localises to the secreted. Blocks olfactory (CNGA2) and retinal (CNGA1) cyclic nucleotide-gated (CNG) ion channel currents. Does not inhibit retinal (CNGA3) currents. It forms high-affinity contacts with the pore turret region and most likely inhibits CNG channel current by blocking the external entrance to the transmembrane pore. Is really more potent that Pseudecin. Does not affect neither depolarization- nor caffeine-induced contraction arterial smooth muscle. The polypeptide is Cysteine-rich venom protein pseudechetoxin (Pseudechis australis (Mulga snake)).